The following is a 174-amino-acid chain: Ribosome maturation factor RimM (174 aa).

A PRC barrel domain is found at Lys-96–Leu-169.

The protein belongs to the RimM family. Binds ribosomal protein uS19.

It is found in the cytoplasm. Its function is as follows. An accessory protein needed during the final step in the assembly of 30S ribosomal subunit, possibly for assembly of the head region. Essential for efficient processing of 16S rRNA. May be needed both before and after RbfA during the maturation of 16S rRNA. It has affinity for free ribosomal 30S subunits but not for 70S ribosomes. This Acetivibrio thermocellus (strain ATCC 27405 / DSM 1237 / JCM 9322 / NBRC 103400 / NCIMB 10682 / NRRL B-4536 / VPI 7372) (Clostridium thermocellum) protein is Ribosome maturation factor RimM.